Consider the following 632-residue polypeptide: Extracellular metalloproteinase 2 (632 aa).

Positions 1–19 (MHGLLLAGLAAALPLGVAG) are cleaved as a signal peptide. A propeptide spanning residues 20-244 (LPARQQSGLS…VHNVVDYVAS (225 aa)) is cleaved from the precursor. Asn-270 carries N-linked (GlcNAc...) asparagine glycosylation. Position 429 (His-429) interacts with Zn(2+). The active site involves Glu-430. His-433 contributes to the Zn(2+) binding site.

Belongs to the peptidase M36 family. It depends on Zn(2+) as a cofactor.

It is found in the secreted. In terms of biological role, secreted metalloproteinase probably acting as a virulence factor. The sequence is that of Extracellular metalloproteinase 2 (MEP2) from Arthroderma benhamiae (Trichophyton mentagrophytes).